The primary structure comprises 417 residues: Zinc finger protein CONSTANS-LIKE 16 (417 aa).

Zn(2+) contacts are provided by Cys17, Cys20, Cys40, and His45. A B box-type; atypical zinc finger spans residues 17–59 (CDSCVKRRARWYCAADDAFLCQSCDSLVHSANPLARRHERVRL). The interval 63–105 (SPAVVKHSNHSSASPPHEVATWHHGFTRKARTPRGSGKKNNSS) is disordered. A coiled-coil region spans residues 212 to 239 (LSNSEMFKIEKDEIEEEVEEIKAMSMDI). The 43-residue stretch at 361 to 403 (REARVSRYREKRRTRLFSKKIRYEVRKLNAEKRPRMKGRFVKR) folds into the CCT domain.

It belongs to the CONSTANS family.

It localises to the nucleus. In Arabidopsis thaliana (Mouse-ear cress), this protein is Zinc finger protein CONSTANS-LIKE 16 (COL16).